The primary structure comprises 253 residues: Proteasome subunit alpha type-3 (253 aa).

A disordered region spans residues 230–253 (ELTEKARKAGDAANKDEDSDNETH). Basic and acidic residues predominate over residues 231-253 (LTEKARKAGDAANKDEDSDNETH). Ser-248 is subject to Phosphoserine.

Belongs to the peptidase T1A family. As to quaternary structure, the 26S proteasome consists of a 20S proteasome core and two 19S regulatory subunits. The 20S proteasome core is composed of 28 subunits that are arranged in four stacked rings, resulting in a barrel-shaped structure. The two end rings are each formed by seven alpha subunits, and the two central rings are each formed by seven beta subunits. The catalytic chamber with the active sites is on the inside of the barrel. Interacts with ntc.

Its subcellular location is the cytoplasm. It localises to the nucleus. The proteasome is a multicatalytic proteinase complex which is characterized by its ability to cleave peptides with Arg, Phe, Tyr, Leu, and Glu adjacent to the leaving group at neutral or slightly basic pH. The proteasome has an ATP-dependent proteolytic activity. In Drosophila melanogaster (Fruit fly), this protein is Proteasome subunit alpha type-3 (Prosalpha7).